Here is a 158-residue protein sequence, read N- to C-terminus: Transcription elongation factor GreA (158 aa).

A coiled-coil region spans residues 53-73 (EQQSFIEGRIQEIEGKLSNAQ).

It belongs to the GreA/GreB family.

Its function is as follows. Necessary for efficient RNA polymerase transcription elongation past template-encoded arresting sites. The arresting sites in DNA have the property of trapping a certain fraction of elongating RNA polymerases that pass through, resulting in locked ternary complexes. Cleavage of the nascent transcript by cleavage factors such as GreA or GreB allows the resumption of elongation from the new 3'terminus. GreA releases sequences of 2 to 3 nucleotides. This Halorhodospira halophila (strain DSM 244 / SL1) (Ectothiorhodospira halophila (strain DSM 244 / SL1)) protein is Transcription elongation factor GreA.